The following is a 777-amino-acid chain: Gliding motility regulatory protein (777 aa).

An HPt domain is found at 1-108; it reads MDTEALKKSL…SDLNEDLSGA (108 aa). His-49 carries the phosphohistidine; by autocatalysis modification. Disordered stretches follow at residues 129–149 and 164–212; these read TPPA…PPAP and PAPV…KSAV. Pro residues-rich tracts occupy residues 139–149 and 164–177; these read VAPPPAPPPAP and PAPV…PPTQ. Over residues 178-197 the composition is skewed to low complexity; that stretch reads APVAEPGAHAAAAAPHPAAA. One can recognise a Histidine kinase domain in the interval 270-509; the sequence is DISNEVREQL…TITLRLPQSL (240 aa). Residues 511–645 enclose the CheW-like domain; it reads LMKVLLVRLG…VPDIMAEVRR (135 aa). One can recognise a Response regulatory domain in the interval 660–776; sequence RVLLVDDSPI…EVLAQAIDRL (117 aa). Asp-709 bears the 4-aspartylphosphate mark.

The catalysed reaction is ATP + protein L-histidine = ADP + protein N-phospho-L-histidine.. Functionally, frzE is involved in a sensory transduction pathway that controls the frequency at which cells reverse their gliding direction. FrzE seems to be capable of autophosphorylating itself on a histidine residue and then to transfer that group to an aspartate residue in the C-terminal part of the protein. This is Gliding motility regulatory protein (frzE) from Myxococcus xanthus.